The primary structure comprises 682 residues: Glutamine--fructose-6-phosphate aminotransferase [isomerizing] 2 (682 aa).

The For GATase activity role is filled by Cys2. The Glutamine amidotransferase type-2 domain maps to 2–288 (CGIFAYMNYR…DDDIAAVADG (287 aa)). Phosphoserine is present on Ser244. 2 SIS domains span residues 360–499 (HLKE…DRIS) and 531–672 (LALE…VDFP). Substrate-binding positions include 377–378 (TS), 422–424 (SQS), Thr427, and His578.

It catalyses the reaction D-fructose 6-phosphate + L-glutamine = D-glucosamine 6-phosphate + L-glutamate. It functions in the pathway nucleotide-sugar biosynthesis; UDP-N-acetyl-alpha-D-glucosamine biosynthesis; alpha-D-glucosamine 6-phosphate from D-fructose 6-phosphate: step 1/1. In terms of biological role, controls the flux of glucose into the hexosamine pathway. Most likely involved in regulating the availability of precursors for N- and O-linked glycosylation of proteins. The sequence is that of Glutamine--fructose-6-phosphate aminotransferase [isomerizing] 2 (Gfpt2) from Mus musculus (Mouse).